The chain runs to 119 residues: Phosphoribosyl-AMP cyclohydrolase (119 aa).

Asp72 is a Mg(2+) binding site. A Zn(2+)-binding site is contributed by Cys73. Mg(2+)-binding residues include Asp74 and Asp76. Zn(2+) is bound by residues Cys89 and Cys96.

It belongs to the PRA-CH family. Homodimer. Requires Mg(2+) as cofactor. Zn(2+) is required as a cofactor.

Its subcellular location is the cytoplasm. The catalysed reaction is 1-(5-phospho-beta-D-ribosyl)-5'-AMP + H2O = 1-(5-phospho-beta-D-ribosyl)-5-[(5-phospho-beta-D-ribosylamino)methylideneamino]imidazole-4-carboxamide. It functions in the pathway amino-acid biosynthesis; L-histidine biosynthesis; L-histidine from 5-phospho-alpha-D-ribose 1-diphosphate: step 3/9. Functionally, catalyzes the hydrolysis of the adenine ring of phosphoribosyl-AMP. The sequence is that of Phosphoribosyl-AMP cyclohydrolase from Methanocella arvoryzae (strain DSM 22066 / NBRC 105507 / MRE50).